The primary structure comprises 416 residues: Formyl-CoA:oxalate CoA-transferase (416 aa).

CoA is bound by residues 17–18, Arg-38, 72–75, 96–98, His-104, and 137–140; these read QS, LNTK, NFH, and KAYE. The Nucleophile role is filled by Asp-169. 248 to 250 provides a ligand contact to substrate; it reads GGQ. 273-275 contacts CoA; sequence QEQ.

This sequence belongs to the CoA-transferase III family. Frc subfamily. In terms of assembly, homodimer.

The enzyme catalyses formyl-CoA + oxalate = oxalyl-CoA + formate. It functions in the pathway metabolic intermediate degradation; oxalate degradation; CO(2) and formate from oxalate: step 1/2. In terms of biological role, involved in the catabolism of oxalate and in the adapatation to low pH via the induction of the oxalate-dependent acid tolerance response (ATR). Catalyzes the transfer of the CoA moiety from formyl-CoA to oxalate. The chain is Formyl-CoA:oxalate CoA-transferase from Escherichia coli O81 (strain ED1a).